Reading from the N-terminus, the 592-residue chain is Outer spore wall assembly protein SHE10 (592 aa).

An N-terminal signal peptide occupies residues 1–23 (MRFFKRFLLTLTVFIYTLRYLHC). Coiled coils occupy residues 354-385 (ENNISTNLTNTIDELDKNIQEIHEHHVELYEE) and 448-583 (LNQF…KQMG). Basic and acidic residues predominate over residues 507–580 (QSEQEERIKS…EVRKQEEARK (74 aa)). Residues 507 to 592 (QSEQEERIKS…GSPPPPQQQQ (86 aa)) are disordered.

Belongs to the SHE10 family. As to quaternary structure, component of the mitochondria-localized RNase mitochondrial RNA-processing (RNase MRP) composed of one single RNA encoded by the NME1 gene and at least 31 proteins. Absent in the nucleus-localized RNase MRP (NuMRP).

The protein localises to the mitochondrion. Its function is as follows. Involved in spore wall assembly. May be a component of the mitochondrial RNase MRP (MtMRP), a ribonucleoprotein endoribonuclease involved in the cleaving RNA transcripts to generate primers for DNA replication in mitochondria. This chain is Outer spore wall assembly protein SHE10, found in Vanderwaltozyma polyspora (strain ATCC 22028 / DSM 70294 / BCRC 21397 / CBS 2163 / NBRC 10782 / NRRL Y-8283 / UCD 57-17) (Kluyveromyces polysporus).